A 261-amino-acid polypeptide reads, in one-letter code: Syntaxin-7 (261 aa).

Residue serine 2 is modified to N-acetylserine. At 2-238 the chain is on the cytoplasmic side; the sequence is SYTPGVGGDP…DYQRKSRKTL (237 aa). Threonine 4 carries the phosphothreonine modification. Phosphoserine is present on serine 45. A coiled-coil region spans residues 47–69; the sequence is ELRQQLQQKQQYTNQLTKETDKY. Serine 75 bears the Phosphoserine mark. A Phosphothreonine modification is found at threonine 79. A phosphoserine mark is found at serine 125, serine 126, serine 129, and serine 205. The interval 129 to 148 is disordered; it reads SGSFPEDSSKERNLVSWESQ. A t-SNARE coiled-coil homology domain is found at 165–227; it reads LRLIHERESS…QQANQQLSRA (63 aa). Residues 239–259 form a helical; Anchor for type IV membrane protein membrane-spanning segment; the sequence is CIIILILVIGVVIIGLIIWGL. At 260 to 261 the chain is on the vesicular side; the sequence is NR.

The protein belongs to the syntaxin family. As to quaternary structure, forms a SNARE complex with VTI1B, STX8 and VAMP8 which functions in the homotypic fusion of late endosomes. Component of the SNARE complex composed of STX7, STX8, VAMP7 and VTI1B that is required for heterotypic fusion of late endosomes with lysosomes. Interacts with VPS11, VPS16 and VPS18. Interacts with VPS33A. Interacts with TPC1.

It is found in the early endosome membrane. May be involved in protein trafficking from the plasma membrane to the early endosome (EE) as well as in homotypic fusion of endocytic organelles. Mediates the endocytic trafficking from early endosomes to late endosomes and lysosomes. The protein is Syntaxin-7 (STX7) of Pongo abelii (Sumatran orangutan).